Consider the following 434-residue polypeptide: Fez family zinc finger protein 2 (434 aa).

Positions 27 to 42 (SLAFSIERIMAKTSEP) match the Engrailed homology 1 repressor motif. 6 C2H2-type zinc fingers span residues 253–275 (FTCE…MPVH), 281–303 (FVCK…KIIH), 309–331 (HKCN…IRIH), 337–359 (FVCE…KLTH), 365–387 (YKCS…MHTH), and 393–416 (FTCA…RKLH).

This sequence belongs to the krueppel C2H2-type zinc-finger protein family.

The protein resides in the nucleus. In terms of biological role, transcription repressor. Component of the regulatory cascade that controls the development of dopaminergic (DA) and serotonergic (5HT) neurons. The protein is Fez family zinc finger protein 2 (fezf2) of Xenopus laevis (African clawed frog).